The chain runs to 363 residues: 3-ketodihydrosphingosine reductase TSC10 (363 aa).

Residue Leu10 coordinates NADP(+). Residues Gly13, Ser15, and Gly17 each contribute to the NADPH site. The short motif at 13–17 is the GXSXG element; that stretch reads GGSQG. Leu18 provides a ligand contact to NADP(+). Residues Arg40, Lys44, Asp131, and Leu132 each contribute to the NADPH site. Asp131 serves as a coordination point for NADP(+). Ser206 acts as the Proton donor in catalysis. NADP(+) is bound by residues Tyr220, Lys224, and Ser253. Tyr220 (proton acceptor) is an active-site residue. Lys224 acts as the Lowers pKa of active site Tyr in catalysis. A helical membrane pass occupies residues 324–344; the sequence is FVQWLIGVIANLLVVPFYMVL.

Belongs to the short-chain dehydrogenases/reductases (SDR) family.

The protein localises to the endoplasmic reticulum membrane. It carries out the reaction sphinganine + NADP(+) = 3-oxosphinganine + NADPH + H(+). It functions in the pathway lipid metabolism; sphingolipid metabolism. Catalyzes the reduction of 3'-oxosphinganine (3-ketodihydrosphingosine/KDS) to sphinganine (dihydrosphingosine/DHS), the second step of de novo sphingolipid biosynthesis. This is 3-ketodihydrosphingosine reductase TSC10 (TSC10) from Candida glabrata (strain ATCC 2001 / BCRC 20586 / JCM 3761 / NBRC 0622 / NRRL Y-65 / CBS 138) (Yeast).